The chain runs to 260 residues: NifU-like protein C1709.19c (260 aa).

The tract at residues 161–231 is nifU; the sequence is IKELIETSIR…IPEVENVVQV (71 aa).

This sequence belongs to the NifU family.

This Schizosaccharomyces pombe (strain 972 / ATCC 24843) (Fission yeast) protein is NifU-like protein C1709.19c.